The sequence spans 217 residues: Adenylate kinase (217 aa).

11 to 16 (GSGKGT) contacts ATP. An NMP region spans residues 31 to 61 (STGTMLRQALTRSTHKSYELHKNIMHTGDLV). AMP-binding positions include Thr-32, Arg-37, 59 to 61 (DLV), 87 to 90 (GFPR), and Gln-94. An LID region spans residues 124 to 161 (GRRIHVGSGRTYHIKFNPPRNYGLDDITGEILTTRKDD). ATP-binding positions include Arg-125 and 134 to 135 (TY). The AMP site is built by Arg-158 and Arg-169. Arg-202 provides a ligand contact to ATP.

The protein belongs to the adenylate kinase family. In terms of assembly, monomer.

Its subcellular location is the cytoplasm. The enzyme catalyses AMP + ATP = 2 ADP. It participates in purine metabolism; AMP biosynthesis via salvage pathway; AMP from ADP: step 1/1. In terms of biological role, catalyzes the reversible transfer of the terminal phosphate group between ATP and AMP. Plays an important role in cellular energy homeostasis and in adenine nucleotide metabolism. This Blochmanniella pennsylvanica (strain BPEN) protein is Adenylate kinase.